A 155-amino-acid polypeptide reads, in one-letter code: Ribosomal RNA large subunit methyltransferase H (155 aa).

S-adenosyl-L-methionine contacts are provided by residues L72, G103, and 122–127 (LSPLTL).

It belongs to the RNA methyltransferase RlmH family. As to quaternary structure, homodimer.

The protein resides in the cytoplasm. The enzyme catalyses pseudouridine(1915) in 23S rRNA + S-adenosyl-L-methionine = N(3)-methylpseudouridine(1915) in 23S rRNA + S-adenosyl-L-homocysteine + H(+). Functionally, specifically methylates the pseudouridine at position 1915 (m3Psi1915) in 23S rRNA. The protein is Ribosomal RNA large subunit methyltransferase H of Mannheimia succiniciproducens (strain KCTC 0769BP / MBEL55E).